We begin with the raw amino-acid sequence, 324 residues long: Acetyl-coenzyme A carboxylase carboxyl transferase subunit alpha (324 aa).

The CoA carboxyltransferase C-terminal domain maps to 37–291 (ILEEKLENLE…DLMIQKTFQQ (255 aa)).

Belongs to the AccA family. In terms of assembly, acetyl-CoA carboxylase is a heterohexamer composed of biotin carboxyl carrier protein (AccB), biotin carboxylase (AccC) and two subunits each of ACCase subunit alpha (AccA) and ACCase subunit beta (AccD).

The protein localises to the cytoplasm. It carries out the reaction N(6)-carboxybiotinyl-L-lysyl-[protein] + acetyl-CoA = N(6)-biotinyl-L-lysyl-[protein] + malonyl-CoA. The protein operates within lipid metabolism; malonyl-CoA biosynthesis; malonyl-CoA from acetyl-CoA: step 1/1. Its function is as follows. Component of the acetyl coenzyme A carboxylase (ACC) complex. First, biotin carboxylase catalyzes the carboxylation of biotin on its carrier protein (BCCP) and then the CO(2) group is transferred by the carboxyltransferase to acetyl-CoA to form malonyl-CoA. In Bacillus cereus (strain ATCC 14579 / DSM 31 / CCUG 7414 / JCM 2152 / NBRC 15305 / NCIMB 9373 / NCTC 2599 / NRRL B-3711), this protein is Acetyl-coenzyme A carboxylase carboxyl transferase subunit alpha.